Here is a 323-residue protein sequence, read N- to C-terminus: Methenyltetrahydromethanopterin cyclohydrolase (323 aa).

Belongs to the MCH family.

It localises to the cytoplasm. The catalysed reaction is 5,10-methenyl-5,6,7,8-tetrahydromethanopterin + H2O = N(5)-formyl-5,6,7,8-tetrahydromethanopterin + H(+). It participates in one-carbon metabolism; methanogenesis from CO(2); 5,10-methenyl-5,6,7,8-tetrahydromethanopterin from CO(2): step 3/3. In terms of biological role, catalyzes the reversible interconversion of 5-formyl-H(4)MPT to methenyl-H(4)MPT(+). The sequence is that of Methenyltetrahydromethanopterin cyclohydrolase from Methanobrevibacter smithii (strain ATCC 35061 / DSM 861 / OCM 144 / PS).